The following is a 347-amino-acid chain: L-threonine 3-dehydrogenase (347 aa).

Cys43 lines the Zn(2+) pocket. Active-site charge relay system residues include Thr45 and His48. 6 residues coordinate Zn(2+): His68, Glu69, Cys98, Cys101, Cys104, and Cys112. Residues Ile180, Asp200, Arg205, 267–269, and 292–293 each bind NAD(+); these read LSL and IT.

This sequence belongs to the zinc-containing alcohol dehydrogenase family. As to quaternary structure, homotetramer. The cofactor is Zn(2+).

It localises to the cytoplasm. It carries out the reaction L-threonine + NAD(+) = (2S)-2-amino-3-oxobutanoate + NADH + H(+). It participates in amino-acid degradation; L-threonine degradation via oxydo-reductase pathway; glycine from L-threonine: step 1/2. In terms of biological role, catalyzes the NAD(+)-dependent oxidation of L-threonine to 2-amino-3-ketobutyrate. This chain is L-threonine 3-dehydrogenase, found in Bacillus subtilis (strain 168).